The primary structure comprises 329 residues: Lipoyl synthase (329 aa).

Positions 55, 60, 66, 81, 85, 88, and 292 each coordinate [4Fe-4S] cluster. The Radical SAM core domain maps to 67-281; sequence WEDREATFLI…RDEAEAIGFL (215 aa).

The protein belongs to the radical SAM superfamily. Lipoyl synthase family. Requires [4Fe-4S] cluster as cofactor.

The protein resides in the cytoplasm. The catalysed reaction is [[Fe-S] cluster scaffold protein carrying a second [4Fe-4S](2+) cluster] + N(6)-octanoyl-L-lysyl-[protein] + 2 oxidized [2Fe-2S]-[ferredoxin] + 2 S-adenosyl-L-methionine + 4 H(+) = [[Fe-S] cluster scaffold protein] + N(6)-[(R)-dihydrolipoyl]-L-lysyl-[protein] + 4 Fe(3+) + 2 hydrogen sulfide + 2 5'-deoxyadenosine + 2 L-methionine + 2 reduced [2Fe-2S]-[ferredoxin]. It functions in the pathway protein modification; protein lipoylation via endogenous pathway; protein N(6)-(lipoyl)lysine from octanoyl-[acyl-carrier-protein]: step 2/2. Catalyzes the radical-mediated insertion of two sulfur atoms into the C-6 and C-8 positions of the octanoyl moiety bound to the lipoyl domains of lipoate-dependent enzymes, thereby converting the octanoylated domains into lipoylated derivatives. This is Lipoyl synthase from Leifsonia xyli subsp. xyli (strain CTCB07).